The sequence spans 332 residues: Ferredoxin--NADP reductase 1 (332 aa).

The FAD site is built by aspartate 35, lysine 43, phenylalanine 48, valine 88, phenylalanine 123, aspartate 284, and threonine 325.

Belongs to the ferredoxin--NADP reductase type 2 family. Homodimer. FAD is required as a cofactor.

The enzyme catalyses 2 reduced [2Fe-2S]-[ferredoxin] + NADP(+) + H(+) = 2 oxidized [2Fe-2S]-[ferredoxin] + NADPH. This chain is Ferredoxin--NADP reductase 1, found in Listeria monocytogenes serotype 4b (strain F2365).